The primary structure comprises 502 residues: Probable cytosol aminopeptidase (502 aa).

Residues Lys270 and Asp275 each contribute to the Mn(2+) site. Residue Lys282 is part of the active site. The Mn(2+) site is built by Asp293, Asp352, and Glu354. Residue Arg356 is part of the active site.

The protein belongs to the peptidase M17 family. Mn(2+) serves as cofactor.

The protein localises to the cytoplasm. It catalyses the reaction Release of an N-terminal amino acid, Xaa-|-Yaa-, in which Xaa is preferably Leu, but may be other amino acids including Pro although not Arg or Lys, and Yaa may be Pro. Amino acid amides and methyl esters are also readily hydrolyzed, but rates on arylamides are exceedingly low.. It carries out the reaction Release of an N-terminal amino acid, preferentially leucine, but not glutamic or aspartic acids.. Functionally, presumably involved in the processing and regular turnover of intracellular proteins. Catalyzes the removal of unsubstituted N-terminal amino acids from various peptides. The chain is Probable cytosol aminopeptidase from Buchnera aphidicola subsp. Schizaphis graminum (strain Sg).